Consider the following 375-residue polypeptide: Growth/differentiation factor 8 (375 aa).

An N-terminal signal peptide occupies residues 1 to 18; the sequence is MQRLQICVYIYLFVLIVA. Residues 19–266 constitute a propeptide that is removed on maturation; sequence GPVDLSENSE…VTDTPKRSRR (248 aa). A glycan (N-linked (GlcNAc...) asparagine) is linked at N71. 4 disulfides stabilise this stretch: C272–C282, C281–C340, C309–C372, and C313–C374.

The protein belongs to the TGF-beta family. As to quaternary structure, homodimer; disulfide-linked. Interacts with WFIKKN2, leading to inhibit its activity. Interacts with FSTL3. Post-translationally, synthesized as large precursor molecule that undergoes proteolytic cleavage to generate an N-terminal propeptide and a disulfide linked C-terminal dimer, which is the biologically active molecule. The circulating form consists of a latent complex of the C-terminal dimer and other proteins, including its propeptide, which maintain the C-terminal dimer in a latent, inactive state. Ligand activation requires additional cleavage of the prodomain by a tolloid-like metalloproteinase.

It localises to the secreted. Its function is as follows. Acts specifically as a negative regulator of skeletal muscle growth. In Canis lupus familiaris (Dog), this protein is Growth/differentiation factor 8 (MSTN).